The chain runs to 287 residues: ATP synthase subunit a (287 aa).

6 consecutive transmembrane segments (helical) span residues 37 to 57 (LDSV…MWLA), 96 to 116 (FIAP…AMDL), 149 to 169 (LGLS…IKGL), 187 to 207 (PVFA…EYVA), 224 to 244 (ELVF…LSGV), and 266 to 286 (TLQA…AHEA).

The protein belongs to the ATPase A chain family. As to quaternary structure, F-type ATPases have 2 components, CF(1) - the catalytic core - and CF(0) - the membrane proton channel. CF(1) has five subunits: alpha(3), beta(3), gamma(1), delta(1), epsilon(1). CF(0) has three main subunits: a(1), b(2) and c(9-12). The alpha and beta chains form an alternating ring which encloses part of the gamma chain. CF(1) is attached to CF(0) by a central stalk formed by the gamma and epsilon chains, while a peripheral stalk is formed by the delta and b chains.

It is found in the cell inner membrane. Its function is as follows. Key component of the proton channel; it plays a direct role in the translocation of protons across the membrane. The protein is ATP synthase subunit a of Acidovorax sp. (strain JS42).